A 290-amino-acid chain; its full sequence is Iron-sulfur cluster carrier protein (290 aa).

47–54 (GKGGVGKS) contributes to the ATP binding site.

This sequence belongs to the Mrp/NBP35 ATP-binding proteins family. As to quaternary structure, homodimer.

Its function is as follows. Binds and transfers iron-sulfur (Fe-S) clusters to target apoproteins. Can hydrolyze ATP. The sequence is that of Iron-sulfur cluster carrier protein from Methanocaldococcus jannaschii (strain ATCC 43067 / DSM 2661 / JAL-1 / JCM 10045 / NBRC 100440) (Methanococcus jannaschii).